A 325-amino-acid chain; its full sequence is Beta-ketoacyl-[acyl-carrier-protein] synthase III (325 aa).

Catalysis depends on residues C114 and H252. Positions 253 to 257 are ACP-binding; it reads QANFR. The active site involves N282.

Belongs to the thiolase-like superfamily. FabH family. Homodimer.

It is found in the cytoplasm. It catalyses the reaction malonyl-[ACP] + acetyl-CoA + H(+) = 3-oxobutanoyl-[ACP] + CO2 + CoA. Its pathway is lipid metabolism; fatty acid biosynthesis. In terms of biological role, catalyzes the condensation reaction of fatty acid synthesis by the addition to an acyl acceptor of two carbons from malonyl-ACP. Catalyzes the first condensation reaction which initiates fatty acid synthesis and may therefore play a role in governing the total rate of fatty acid production. Possesses both acetoacetyl-ACP synthase and acetyl transacylase activities. Its substrate specificity determines the biosynthesis of branched-chain and/or straight-chain of fatty acids. This is Beta-ketoacyl-[acyl-carrier-protein] synthase III from Novosphingobium aromaticivorans (strain ATCC 700278 / DSM 12444 / CCUG 56034 / CIP 105152 / NBRC 16084 / F199).